We begin with the raw amino-acid sequence, 253 residues long: MKHIVIPARFSSSRLPGKPLLLIHDRPMILRVVDQAKKVEGFDDLCVATDDERIAEICCAEGVDVVLTSADHPSGTDRLSEVARIKGWDADDIIVNVQGDEPLLPAQLVQQVAKLLVDKPNCSMSTLCEPIHALDEFQRDSIVKVVMSKQNEALYFSRATIPYDRDSAKQAEPTLHSQAFRHLGLYAYRVSLLQEYVTWEMGKLEKLESLEQLRVLENGHRIAIAVAEANLPPGVDTQADLDRLNNMPVESFE.

This sequence belongs to the KdsB family.

It localises to the cytoplasm. The catalysed reaction is 3-deoxy-alpha-D-manno-oct-2-ulosonate + CTP = CMP-3-deoxy-beta-D-manno-octulosonate + diphosphate. The protein operates within nucleotide-sugar biosynthesis; CMP-3-deoxy-D-manno-octulosonate biosynthesis; CMP-3-deoxy-D-manno-octulosonate from 3-deoxy-D-manno-octulosonate and CTP: step 1/1. Its pathway is bacterial outer membrane biogenesis; lipopolysaccharide biosynthesis. Its function is as follows. Activates KDO (a required 8-carbon sugar) for incorporation into bacterial lipopolysaccharide in Gram-negative bacteria. The protein is 3-deoxy-manno-octulosonate cytidylyltransferase of Acinetobacter baumannii (strain AYE).